The following is an 87-amino-acid chain: Beta-toxin Ct1a (87 aa).

The signal sequence occupies residues 1-19; that stretch reads MNSLLMITACLALIGTVWA. Residues 20-85 enclose the LCN-type CS-alpha/beta domain; the sequence is KEGYLVNHST…VWPLPKKTCN (66 aa). 4 disulfide bridges follow: Cys-31–Cys-84, Cys-35–Cys-60, Cys-44–Cys-65, and Cys-48–Cys-67. Residue Asn-85 is modified to Asparagine amide.

It belongs to the long (4 C-C) scorpion toxin superfamily. Sodium channel inhibitor family. Beta subfamily. In terms of tissue distribution, expressed by the venom gland.

Its subcellular location is the secreted. In terms of biological role, beta toxins bind voltage-independently at site-4 of sodium channels (Nav) and shift the voltage of activation toward more negative potentials thereby affecting sodium channel activation and promoting spontaneous and repetitive firing. Is lethal to mice but does not show toxicity to freshwater shrimp and crickets. This is Beta-toxin Ct1a from Centruroides tecomanus (Scorpion).